Consider the following 100-residue polypeptide: Urease subunit gamma (100 aa).

The protein belongs to the urease gamma subunit family. Heterotrimer of UreA (gamma), UreB (beta) and UreC (alpha) subunits. Three heterotrimers associate to form the active enzyme.

Its subcellular location is the cytoplasm. It carries out the reaction urea + 2 H2O + H(+) = hydrogencarbonate + 2 NH4(+). It participates in nitrogen metabolism; urea degradation; CO(2) and NH(3) from urea (urease route): step 1/1. The polypeptide is Urease subunit gamma (Nostoc punctiforme (strain ATCC 29133 / PCC 73102)).